The sequence spans 202 residues: Probable nicotinate-nucleotide adenylyltransferase (202 aa).

The protein belongs to the NadD family.

It catalyses the reaction nicotinate beta-D-ribonucleotide + ATP + H(+) = deamido-NAD(+) + diphosphate. It participates in cofactor biosynthesis; NAD(+) biosynthesis; deamido-NAD(+) from nicotinate D-ribonucleotide: step 1/1. Catalyzes the reversible adenylation of nicotinate mononucleotide (NaMN) to nicotinic acid adenine dinucleotide (NaAD). This chain is Probable nicotinate-nucleotide adenylyltransferase, found in Clostridium perfringens (strain SM101 / Type A).